The sequence spans 488 residues: Protein nucleotidyltransferase YdiU (488 aa).

Positions 91, 93, 94, 114, 126, 127, 177, and 184 each coordinate ATP. The active-site Proton acceptor is the D253. Mg(2+)-binding residues include N254 and D263. D263 lines the ATP pocket.

This sequence belongs to the SELO family. Mg(2+) serves as cofactor. Mn(2+) is required as a cofactor.

The enzyme catalyses L-seryl-[protein] + ATP = 3-O-(5'-adenylyl)-L-seryl-[protein] + diphosphate. It carries out the reaction L-threonyl-[protein] + ATP = 3-O-(5'-adenylyl)-L-threonyl-[protein] + diphosphate. The catalysed reaction is L-tyrosyl-[protein] + ATP = O-(5'-adenylyl)-L-tyrosyl-[protein] + diphosphate. It catalyses the reaction L-histidyl-[protein] + UTP = N(tele)-(5'-uridylyl)-L-histidyl-[protein] + diphosphate. The enzyme catalyses L-seryl-[protein] + UTP = O-(5'-uridylyl)-L-seryl-[protein] + diphosphate. It carries out the reaction L-tyrosyl-[protein] + UTP = O-(5'-uridylyl)-L-tyrosyl-[protein] + diphosphate. Functionally, nucleotidyltransferase involved in the post-translational modification of proteins. It can catalyze the addition of adenosine monophosphate (AMP) or uridine monophosphate (UMP) to a protein, resulting in modifications known as AMPylation and UMPylation. This chain is Protein nucleotidyltransferase YdiU, found in Bacillus cereus (strain G9842).